The primary structure comprises 363 residues: Chorismate synthase (363 aa).

NADP(+)-binding residues include Arg48 and Arg54. Residues 125–127, 238–239, Gly278, 293–297, and Arg319 each bind FMN; these read RSS, NA, and KPTSS.

The protein belongs to the chorismate synthase family. As to quaternary structure, homotetramer. FMNH2 is required as a cofactor.

It catalyses the reaction 5-O-(1-carboxyvinyl)-3-phosphoshikimate = chorismate + phosphate. It functions in the pathway metabolic intermediate biosynthesis; chorismate biosynthesis; chorismate from D-erythrose 4-phosphate and phosphoenolpyruvate: step 7/7. Functionally, catalyzes the anti-1,4-elimination of the C-3 phosphate and the C-6 proR hydrogen from 5-enolpyruvylshikimate-3-phosphate (EPSP) to yield chorismate, which is the branch point compound that serves as the starting substrate for the three terminal pathways of aromatic amino acid biosynthesis. This reaction introduces a second double bond into the aromatic ring system. The protein is Chorismate synthase of Acidithiobacillus ferrooxidans (strain ATCC 23270 / DSM 14882 / CIP 104768 / NCIMB 8455) (Ferrobacillus ferrooxidans (strain ATCC 23270)).